We begin with the raw amino-acid sequence, 163 residues long: Nucleotide-binding protein Pnap_1080 (163 aa).

Belongs to the YajQ family.

Functionally, nucleotide-binding protein. This is Nucleotide-binding protein Pnap_1080 from Polaromonas naphthalenivorans (strain CJ2).